Consider the following 342-residue polypeptide: S-adenosylmethionine:tRNA ribosyltransferase-isomerase (342 aa).

It belongs to the QueA family. Monomer.

The protein localises to the cytoplasm. It catalyses the reaction 7-aminomethyl-7-carbaguanosine(34) in tRNA + S-adenosyl-L-methionine = epoxyqueuosine(34) in tRNA + adenine + L-methionine + 2 H(+). It participates in tRNA modification; tRNA-queuosine biosynthesis. Its function is as follows. Transfers and isomerizes the ribose moiety from AdoMet to the 7-aminomethyl group of 7-deazaguanine (preQ1-tRNA) to give epoxyqueuosine (oQ-tRNA). The protein is S-adenosylmethionine:tRNA ribosyltransferase-isomerase of Streptococcus pyogenes serotype M49 (strain NZ131).